A 398-amino-acid chain; its full sequence is Chalcone synthase 1 (398 aa).

Cys167 is an active-site residue.

The protein belongs to the thiolase-like superfamily. Chalcone/stilbene synthases family.

It catalyses the reaction (E)-4-coumaroyl-CoA + 3 malonyl-CoA + 3 H(+) = 2',4,4',6'-tetrahydroxychalcone + 3 CO2 + 4 CoA. Its pathway is secondary metabolite biosynthesis; flavonoid biosynthesis. In terms of biological role, the primary product of this enzyme is 4,2',4',6'-tetrahydroxychalcone (also termed naringenin-chalcone or chalcone) which can under specific conditions spontaneously isomerize into naringenin. This Gerbera hybrida (Daisy) protein is Chalcone synthase 1 (CHS1).